Reading from the N-terminus, the 132-residue chain is Small ribosomal subunit protein uS8 (132 aa).

Belongs to the universal ribosomal protein uS8 family. As to quaternary structure, part of the 30S ribosomal subunit. Contacts proteins S5 and S12.

In terms of biological role, one of the primary rRNA binding proteins, it binds directly to 16S rRNA central domain where it helps coordinate assembly of the platform of the 30S subunit. This Streptococcus pneumoniae (strain Taiwan19F-14) protein is Small ribosomal subunit protein uS8.